Consider the following 223-residue polypeptide: Dephospho-CoA kinase (223 aa).

Positions 22 to 223 (LIGLSGPSCS…LLQEVKKRGF (202 aa)) constitute a DPCK domain. 30–35 (CSGKNT) contacts ATP.

Belongs to the CoaE family.

Its subcellular location is the cytoplasm. The enzyme catalyses 3'-dephospho-CoA + ATP = ADP + CoA + H(+). Its pathway is cofactor biosynthesis; coenzyme A biosynthesis; CoA from (R)-pantothenate: step 5/5. Functionally, catalyzes the phosphorylation of the 3'-hydroxyl group of dephosphocoenzyme A to form coenzyme A. The chain is Dephospho-CoA kinase from Treponema denticola (strain ATCC 35405 / DSM 14222 / CIP 103919 / JCM 8153 / KCTC 15104).